Consider the following 725-residue polypeptide: Ribonuclease Y (725 aa).

A helical transmembrane segment spans residues 4 to 24 (VLVILLSLVLLVLVALILAVA). Disordered stretches follow at residues 62–140 (DGPA…ASDT), 165–195 (VAAT…SVRR), and 300–321 (EQRV…AGRE). 2 stretches are compositionally biased toward low complexity: residues 84 to 100 (DAPG…PDAG) and 114 to 137 (AAAP…PADA). The KH domain maps to 415–481 (VVTVLHLPGD…RITLAALVSD (67 aa)). The HD domain occupies 541–634 (VLAHLIESAH…TQAADQISGG (94 aa)).

It belongs to the RNase Y family.

The protein resides in the cell membrane. Functionally, endoribonuclease that initiates mRNA decay. The sequence is that of Ribonuclease Y from Frankia alni (strain DSM 45986 / CECT 9034 / ACN14a).